Here is an 847-residue protein sequence, read N- to C-terminus: A-kinase anchor protein 4 (847 aa).

Residues Met1–Asn187 constitute a propeptide that is removed on maturation. A phosphoserine mark is found at Ser95, Ser129, Ser189, and Ser203. Polar residues predominate over residues Lys182 to Val204. Residues Lys182–Gly209 are disordered. Residue Thr206 is modified to Phosphothreonine. 3 positions are modified to phosphoserine: Ser212, Ser225, and Ser270. The segment at Tyr218–Ala231 is interaction with Prkar1a and Prkar2a. Position 300 is a phosphotyrosine (Tyr300). Ser301, Ser304, Ser340, Ser430, Ser441, Ser443, Ser462, Ser491, Ser496, and Ser503 each carry phosphoserine. The tract at residues Tyr334–Met343 is PKA-RI subunit binding domain. Thr505 carries the phosphothreonine modification. The interval Lys511 to Ser536 is disordered. Over residues Pro524–Ile533 the composition is skewed to basic and acidic residues. 2 positions are modified to phosphoserine: Ser536 and Ser581. The segment at Gln583–Ala613 is disordered. Phosphoserine is present on residues Ser626, Ser631, Ser648, Ser650, Ser674, Ser677, Ser700, and Ser729. Residues Cys655–Ser677 form a disordered region.

Belongs to the AKAP110 family. As to quaternary structure, interacts with PRKAR1A and PRKAR2A. Interacts with ENO4. Interacts with QRICH2. Phosphorylated by STK33 during sperm flagella assembly. Expressed in flagella of epididymal sperm.

The protein localises to the cell projection. Its subcellular location is the cilium. It localises to the flagellum. Major structural component of sperm fibrous sheath. May play a role in sperm motility. This Rattus norvegicus (Rat) protein is A-kinase anchor protein 4.